The following is a 170-amino-acid chain: N-alpha-acetyltransferase 50 (170 aa).

The N-acetyltransferase domain occupies 6–155 (IELGDVTPHN…DAHVLQKNLK (150 aa)). Y31 is a binding site for substrate. Y73 is a catalytic residue. M75 is a substrate binding site. 77–90 (LGCLAPYRRLGIGT) provides a ligand contact to acetyl-CoA. Position 79–90 (79–90 (CLAPYRRLGIGT)) interacts with CoA. The active site involves H112. 117 to 126 (NESAIDFYRK) is a binding site for CoA. Residues 138-141 (YYKR) form a substrate region.

Belongs to the acetyltransferase family. GNAT subfamily.

It is found in the cytoplasm. Its subcellular location is the nucleus. It catalyses the reaction N-terminal L-methionyl-L-alanyl-[protein] + acetyl-CoA = N-terminal N(alpha)-acetyl-L-methionyl-L-alanyl-[protein] + CoA + H(+). The enzyme catalyses N-terminal L-methionyl-L-seryl-[protein] + acetyl-CoA = N-terminal N(alpha)-acetyl-L-methionyl-L-seryl-[protein] + CoA + H(+). The catalysed reaction is N-terminal L-methionyl-L-valyl-[protein] + acetyl-CoA = N-terminal N(alpha)-acetyl-L-methionyl-L-valyl-[protein] + CoA + H(+). It carries out the reaction N-terminal L-methionyl-L-threonyl-[protein] + acetyl-CoA = N-terminal N(alpha)-acetyl-L-methionyl-L-threonyl-[protein] + CoA + H(+). It catalyses the reaction N-terminal L-methionyl-L-lysyl-[protein] + acetyl-CoA = N-terminal N(alpha)-acetyl-L-methionyl-L-lysyl-[protein] + CoA + H(+). The enzyme catalyses N-terminal L-methionyl-L-leucyl-[protein] + acetyl-CoA = N-terminal N(alpha)-acetyl-L-methionyl-L-leucyl-[protein] + CoA + H(+). The catalysed reaction is N-terminal L-methionyl-L-phenylalanyl-[protein] + acetyl-CoA = N-terminal N(alpha)-acetyl-L-methionyl-L-phenylalanyl-[protein] + CoA + H(+). It carries out the reaction N-terminal L-methionyl-L-tyrosyl-[protein] + acetyl-CoA = N-terminal N(alpha)-acetyl-L-methionyl-L-tyrosyl-[protein] + CoA + H(+). Its function is as follows. N-alpha-acetyltransferase that acetylates the N-terminus of proteins that retain their initiating methionine. Has a broad substrate specificity: able to acetylate the initiator methionine of most peptides, except for those with a proline in second position. Also displays N-epsilon-acetyltransferase activity by mediating acetylation of the side chain of specific lysines on proteins. The relevance of N-epsilon-acetyltransferase activity is however unclear. Required for sister chromatid cohesion during mitosis by promoting binding of CDCA5/sororin to cohesin. This is N-alpha-acetyltransferase 50 (naa50) from Xenopus laevis (African clawed frog).